A 228-amino-acid polypeptide reads, in one-letter code: Ribosomal RNA small subunit methyltransferase G (228 aa).

Residues Gly82, Leu87, Asp105 to Thr107, Val133 to Glu134, and Arg147 each bind S-adenosyl-L-methionine.

The protein belongs to the methyltransferase superfamily. RNA methyltransferase RsmG family.

The protein localises to the cytoplasm. Its function is as follows. Specifically methylates the N7 position of a guanine in 16S rRNA. This Pelodictyon phaeoclathratiforme (strain DSM 5477 / BU-1) protein is Ribosomal RNA small subunit methyltransferase G.